Here is a 699-residue protein sequence, read N- to C-terminus: tRNA 5-methylaminomethyl-2-thiouridine biosynthesis bifunctional protein MnmC (699 aa).

Residues 1 to 247 (MPAVSRPLPP…KREMLCGEIA (247 aa)) form a tRNA (mnm(5)s(2)U34)-methyltransferase region. Positions 275-699 (IGAGLAGTSV…QPSPTTTETP (425 aa)) are FAD-dependent cmnm(5)s(2)U34 oxidoreductase. A disordered region spans residues 675 to 699 (RGNATLSTSSPNDDAQPSPTTTETP).

This sequence in the N-terminal section; belongs to the methyltransferase superfamily. tRNA (mnm(5)s(2)U34)-methyltransferase family. It in the C-terminal section; belongs to the DAO family. FAD serves as cofactor.

The protein resides in the cytoplasm. It catalyses the reaction 5-aminomethyl-2-thiouridine(34) in tRNA + S-adenosyl-L-methionine = 5-methylaminomethyl-2-thiouridine(34) in tRNA + S-adenosyl-L-homocysteine + H(+). Catalyzes the last two steps in the biosynthesis of 5-methylaminomethyl-2-thiouridine (mnm(5)s(2)U) at the wobble position (U34) in tRNA. Catalyzes the FAD-dependent demodification of cmnm(5)s(2)U34 to nm(5)s(2)U34, followed by the transfer of a methyl group from S-adenosyl-L-methionine to nm(5)s(2)U34, to form mnm(5)s(2)U34. The sequence is that of tRNA 5-methylaminomethyl-2-thiouridine biosynthesis bifunctional protein MnmC from Chromohalobacter salexigens (strain ATCC BAA-138 / DSM 3043 / CIP 106854 / NCIMB 13768 / 1H11).